The sequence spans 108 residues: Small proline-rich protein 5 (108 aa).

A compositionally biased stretch (low complexity) spans 1–13 (MSQQKQKQCAPPQ). Disordered stretches follow at residues 1–24 (MSQQ…QRCP) and 73–108 (PPPQ…SKQK). Pro residues-rich tracts occupy residues 14 to 24 (QCCPPPQQRCP) and 73 to 100 (PPPQ…PPPQ).

Positively regulates keratinocyte differentiation by inducing genes associated with epidermal differentiation. The chain is Small proline-rich protein 5 from Homo sapiens (Human).